Reading from the N-terminus, the 88-residue chain is Small ribosomal subunit protein uS15 (88 aa).

It belongs to the universal ribosomal protein uS15 family. As to quaternary structure, part of the 30S ribosomal subunit. Forms a bridge to the 50S subunit in the 70S ribosome, contacting the 23S rRNA.

In terms of biological role, one of the primary rRNA binding proteins, it binds directly to 16S rRNA where it helps nucleate assembly of the platform of the 30S subunit by binding and bridging several RNA helices of the 16S rRNA. Functionally, forms an intersubunit bridge (bridge B4) with the 23S rRNA of the 50S subunit in the ribosome. This Geotalea uraniireducens (strain Rf4) (Geobacter uraniireducens) protein is Small ribosomal subunit protein uS15.